Here is a 582-residue protein sequence, read N- to C-terminus: MVSFLSSSVSRLPLRIAGRRIPGRFAVPQVRTYAKDLKFGVDARASLLTGVDTLARAVSVTLGPKGRNVLIDQPFGSPKITKDGVTVARSVSLKDKFENLGARLVQDVASKTNEVAGDGTTTATVLTRAIFSETVRNVAAGCNPMDLRRGIQLAVDNVVEFLQANKRDITTSEEISQVATISANGDTHIGELLAKAMERVGKEGVITVKEGRTISDELEVTEGMKFDRGYISPYFITDVKSQKVEFENPLILLSEKKVSAVQDILPSLELAAQQRRPLVIIAEDVDGEALAACILNKLRGQLQVVAIKAPGFGDNRRNMLGDLAVLTDSAVFNDEIDVSIEKAQPHHLGSCGSVTVTKEDTIIMKGAGDHVKVNDRCEQIRGVMADPNLTEYEKEKLQERLAKLSGGIAVIKVGGSSEVEVNEKKDRIVDALNAVKAAVSEGVLPGAGTSFVKASLRLGDIPTNNFDQKLGVEIVRKAITRPAQTILENAGLEGNLIVGKLKELYGKEFNIGYDIAKDRFVDLNEIGVLDPLKVVRTGLVDASGVASLMGTTECAIVDAPEESKAPAGPPGMGGMGGMPGMM.

The transit peptide at 1-35 directs the protein to the mitochondrion; that stretch reads MVSFLSSSVSRLPLRIAGRRIPGRFAVPQVRTYAK. Phosphoserine is present on residues S77 and S92. Positions 561–582 are disordered; sequence EESKAPAGPPGMGGMGGMPGMM. Over residues 570–582 the composition is skewed to gly residues; sequence PGMGGMGGMPGMM.

Belongs to the chaperonin (HSP60) family.

The protein localises to the mitochondrion. May participate in assembly and/or disassembly of proteins imported into the mitochondrion. HSP60 are ATPases and have affinity for unfolded proteins. This chain is Heat shock protein 60, mitochondrial (hsp60), found in Schizosaccharomyces pombe (strain 972 / ATCC 24843) (Fission yeast).